A 7180-amino-acid chain; its full sequence is Replicase polyprotein 1ab (7180 aa).

One can recognise a CoV Nsp1 globular domain in the interval 54–196 (LVNHVRVDCS…PWSILLRKGG (143 aa)). One can recognise a BetaCoV Nsp1 C-terminal domain in the interval 217–247 (FNVEDACEEVHLNPRGKYSCKAYALLRGYRG). Positions 251 to 513 (ILFVDQYGCD…AICRFLYMDY (263 aa)) constitute a CoV Nsp2 N-terminal domain. The Zn(2+) site is built by C390, C395, C411, and C414. The C4 stretch occupies residues 390–414 (CCGDTCGFRGWVPGNMMDGFPCPGC). Positions 518–706 (CGNLEQRAIL…VDKFKTFFKV (189 aa)) constitute a CoV Nsp2 middle domain. The CoV Nsp2 C-terminal domain maps to 726–832 (SNRVCLAGSK…LDQCWRFPCA (107 aa)). The Ubiquitin-like 1 domain maps to 834 to 946 (KKVVFNDKPK…MYCSFSAPDE (113 aa)). Positions 1083-1320 (AFDAIYSETL…IAQLYGSCIT (238 aa)) constitute a Peptidase C16 1 domain. The For PL1-PRO activity role is filled by C1120. Zn(2+) is bound by residues C1197, C1200, C1223, and C1225. The C4-type 1 zinc finger occupies 1197–1225 (CLKCGMELKLQGLDAVFFYGDVVSHMCKC). Active-site for PL1-PRO activity residues include H1271 and D1282. Positions 1321–1481 (PNVCFVKGDV…VIEKCQVTSV (161 aa)) constitute a Macro domain. In terms of domain architecture, DPUP spans 1536-1608 (DDARVFVQAN…VSQIRALLAN (73 aa)). The 56-residue stretch at 1607–1662 (ANKVDVLCTVDGVNFRSCCVAEGEVFGKTLGSVFCDGINVTKVRCSAIHKGKVFFQ) folds into the Ubiquitin-like 2 domain. One can recognise a Peptidase C16 2 domain in the interval 1677–1936 (AFGFDEPQLL…CVAYKPDLSQ (260 aa)). C1715 acts as the For PL2-PRO activity in catalysis. Positions 1793, 1795, 1827, and 1829 each coordinate Zn(2+). The C4-type 2 zinc-finger motif lies at 1793-1829 (CKCGVKQEQRKGVDAVMHFGTLDKSGLVKGYNIACTC). Active-site for PL2-PRO activity residues include H1872 and D1886. The 102-residue stretch at 1950-2051 (IKAQFRTFEK…TYFNRPSVVC (102 aa)) folds into the Nucleic acid-binding domain. One can recognise a G2M domain in the interval 2106–2259 (SVEDQIVMEA…TDNKVIYTTE (154 aa)). Helical transmembrane passes span 2228–2248 (AIAC…WIKF), 2289–2309 (FFLV…NVIL), and 2320–2340 (LPMF…VLTI). The interval 2228–2465 (AIACYGAVKW…FTLLRFYIVV (238 aa)) is HD1. The 3Ecto domain occupies 2325 to 2386 (GQIVAWVKTT…SINVVQHVVD (62 aa)). 2 disulfide bridges follow: C2341/C2365 and C2356/C2362. 2 consecutive transmembrane segments (helical) span residues 2403-2423 (LVIG…LVGM) and 2445-2465 (LFVF…YIVV). Positions 2473–2563 (CLCRHVMYGC…ELKRPVNPTD (91 aa)) are Y1. Positions 2473 to 2840 (CLCRHVMYGC…LTTPFSLKGG (368 aa)) constitute a CoV Nsp3 Y domain. The Zn(2+) site is built by H2477, C2482, C2487, C2490, C2523, H2526, C2530, and C2533. Residues 2477-2490 (HVMYGCSKPGCLFC) form a ZF1 region. The tract at residues 2523 to 2533 (CTKHQWNCLNC) is ZF2. The interval 2564–2656 (SAYYSVIEVK…MVEKKLITTA (93 aa)) is Y2. The interval 2564–2840 (SAYYSVIEVK…LTTPFSLKGG (277 aa)) is coV-Y. The segment at 2657–2739 (NTGLSVSRTM…KSVMAAVNAG (83 aa)) is Y3. The Y4 stretch occupies residues 2740-2840 (VEVTDESCNN…LTTPFSLKGG (101 aa)). Transmembrane regions (helical) follow at residues 2846 to 2866 (VLQW…ALMP), 3099 to 3119 (AFDL…FFAL), 3121 to 3141 (ASSV…YYLI), 3153 to 3173 (VVVI…VFQV), 3180 to 3200 (LYAC…SVVM), and 3205 to 3225 (LVMY…AVVV). Residues 2846–3225 (VLQWLFVANL…FCITYVAVVV (380 aa)) form an HD2 region. One can recognise a Nsp4C domain in the interval 3239–3336 (IGTDVRSDGT…TASVTTSFLQ (98 aa)). The Peptidase C30 domain occupies 3337–3639 (SGIVKMVSPT…YQQLAGVKLQ (303 aa)). Active-site for 3CL-PRO activity residues include H3377 and C3481. The next 7 membrane-spanning stretches (helical) occupy residues 3648–3668 (GTCC…SAFV), 3678–3698 (THML…MLLI), 3705–3725 (LTMY…LVVG), 3748–3768 (TYMD…FVTM), 3775–3795 (VFST…WYFG), 3802–3822 (VLLF…LSLA), and 3846–3866 (LVLL…GVLS). The interval 3648-3866 (GTCCWILAST…VCCCYWGVLS (219 aa)) is HD3. Residues 3928-4016 (SRLTDVKCAN…DYVRDNTVLQ (89 aa)) enclose the RdRp Nsp7 cofactor domain. The RdRp Nsp8 cofactor domain maps to 4017-4213 (ALQSEFVNMA…HNEVSTVVLQ (197 aa)). The Nsp9 ssRNA-binding domain maps to 4214–4323 (NNELMPQKLR…GTLSSTVRLQ (110 aa)). The region spanning 4324–4461 (AGTATEYASN…CVGTGSQFQS (138 aa)) is the ExoN/MTase coactivator domain. Positions 4397, 4400, 4406, 4413, 4439, 4442, 4450, and 4452 each coordinate Zn(2+). Zinc fingers lie at residues 4397-4413 (CIYC…DGLC) and 4439-4452 (CQVC…SCSC). The NiRAN domain occupies 4466 to 4721 (FLNRVRGTSV…DSELFVNGTY (256 aa)). Mn(2+) is bound by residues N4669 and D4678. In terms of domain architecture, Nsp12 Interface spans 4722-4820 (REFDLVQYDF…MNMDVDTHRY (99 aa)). 5 residues coordinate Zn(2+): H4751, C4757, C4762, C4766, and C4943. The 568-residue stretch at 4821-5388 (RLSLKDLLLY…NMYLRSAVMQ (568 aa)) folds into the Nsp12 RNA-dependent RNA polymerase domain. Residues 4823-5037 (SLKDLLLYAA…HQKCLKSIAA (215 aa)) form a rdRp Fingers N-ter region. Positions 5038 to 5076 (TRGVPVVIGTTKFYGGWDDMLRRLIKDVDSPVLMGWDYP) are rdRp Palm N-ter. In terms of domain architecture, RdRp catalytic spans 5068–5230 (PVLMGWDYPK…CYNSEFASKG (163 aa)). The rdRp Fingers C-ter stretch occupies residues 5077–5135 (KCDRAMPNILRIVSSLVLARKHDSCCSHTDRFYRLANECAQVLGEIVMCGGCYYVKPGG). H5098, C5101, and C5102 together coordinate Zn(2+). Residues 5136 to 5271 (TSSGDATTAF…EKGPHEFCSQ (136 aa)) form a rdRp Palm C-ter region. Residues S5215, D5216, and D5217 contribute to the active site. Positions 5272–5388 (HTMLVKMDGD…NMYLRSAVMQ (117 aa)) are rdRp Thumb. In terms of domain architecture, CV ZBD spans 5389–5501 (SVGACVVCSS…EDFNKIASCK (113 aa)). Zn(2+)-binding residues include C5393, C5396, C5404, C5407, C5414, C5417, H5421, H5427, C5438, C5443, C5460, and H5463. Residues 5644–5825 (SVPETFQNNV…MCCLGPDIFL (182 aa)) form the (+)RNA virus helicase ATP-binding domain. 5669–5676 (GPPGTGKS) serves as a coordination point for ATP. The (+)RNA virus helicase C-terminal domain occupies 5826 to 6003 (GTCYRCPKEI…FKDCSKSYVG (178 aa)). The 216-residue stretch at 6057–6272 (LFITRDEAIK…RCLAVHDCFC (216 aa)) folds into the ExoN domain. Catalysis depends on residues D6075, E6077, and E6176. Zn(2+) contacts are provided by C6192, C6195, C6211, H6214, H6242, C6246, and H6249. Catalysis depends on residues H6253 and D6258. Position 6264 (C6264) interacts with Zn(2+). The region spanning 6281 to 6507 (YPIISNEVSV…NLWNTFTRLQ (227 aa)) is the N7-MTase domain. 6316 to 6322 (DIGNPKG) provides a ligand contact to S-adenosyl-L-methionine. The tract at residues 6394–6408 (CNGGSLYVNKHAFHT) is gpppA-binding. The Zn(2+) site is built by C6432, C6453, C6464, and H6467. In terms of domain architecture, Nsp15 N-terminal oligomerization spans 6508-6568 (SLENVVYNLV…NVAVELFAER (61 aa)). The region spanning 6569–6689 (SIRPHPELKL…FAMRRDGDDV (121 aa)) is the AV-Nsp11N/CoV-Nsp15M domain. Positions 6739 to 6878 (SPRSEMEKDF…NEEKVMTFYP (140 aa)) constitute a NendoU domain. The region spanning 6883–7177 (AADWKPGYVM…KEVFVGDSLV (295 aa)) is the Nidovirus-type SAM-dependent 2'-O-MTase domain. Active-site residues include K6927, D7011, K7051, and E7084.

It belongs to the coronaviruses polyprotein 1ab family. Interacts with host PHB and PHB2. In terms of assembly, interacts with papain-like protease nsp3 and non-structural protein 6. As to quaternary structure, monomer. Homodimer. Only the homodimer shows catalytic activity. Interacts with nsp8 and nsp12 to form the replication-transcription complex (RTC): nsp12, nsp7, two subunits of nsp8, and up to two subunits of nsp13. In terms of assembly, interacts with nsp7, nsp13 and nsp12 to form the replication-transcription complex (RTC): nsp12, nsp7, two subunits of nsp8, and up to two subunits of nsp13. As to quaternary structure, interacts with nsp12. Interacts with proofreading exoribonuclease nsp14 and 2'-O-methyltransferase nsp16; these interactions enhance nsp14 and nsp16 enzymatic activities. In terms of assembly, interacts with nsp7 and nsp8 to form the replication-transcription complex (RTC): nsp12, nsp7, two subunits of nsp8, and up to two subunits of nsp13. Interacts with nsp9. As to quaternary structure, interacts with nsp8 to form the replication-transcription complex (RTC): nsp12, nsp7, two subunits of nsp8, and up to two subunits of nsp13. Requires Mn(2+) as cofactor. The cofactor is Mg(2+). In terms of processing, specific enzymatic cleavages in vivo by its own proteases yield mature proteins. 3CL-PRO and PL-PRO proteinases are autocatalytically processed.

It localises to the host membrane. The protein resides in the host cytoplasm. It is found in the host perinuclear region. The protein localises to the host endoplasmic reticulum-Golgi intermediate compartment. It carries out the reaction RNA(n) + a ribonucleoside 5'-triphosphate = RNA(n+1) + diphosphate. The catalysed reaction is ATP + H2O = ADP + phosphate + H(+). It catalyses the reaction Thiol-dependent hydrolysis of ester, thioester, amide, peptide and isopeptide bonds formed by the C-terminal Gly of ubiquitin (a 76-residue protein attached to proteins as an intracellular targeting signal).. The enzyme catalyses a 5'-end (N(7)-methyl 5'-triphosphoguanosine)-ribonucleoside in mRNA + S-adenosyl-L-methionine = a 5'-end (N(7)-methyl 5'-triphosphoguanosine)-(2'-O-methyl-ribonucleoside) in mRNA + S-adenosyl-L-homocysteine + H(+). It carries out the reaction uridylyl-uridylyl-ribonucleotide-RNA = a 3'-end uridylyl-2',3'-cyclophospho-uridine-RNA + a 5'-end dephospho-ribonucleoside-RNA. The catalysed reaction is a 5'-end diphospho-ribonucleoside in mRNA + GTP + H(+) = a 5'-end (5'-triphosphoguanosine)-ribonucleoside in mRNA + diphosphate. It catalyses the reaction a 5'-end (5'-triphosphoguanosine)-ribonucleoside in mRNA + S-adenosyl-L-methionine = a 5'-end (N(7)-methyl 5'-triphosphoguanosine)-ribonucleoside in mRNA + S-adenosyl-L-homocysteine. The replicase polyprotein of coronaviruses is a multifunctional protein: it contains the activities necessary for the transcription of negative stranded RNA, leader RNA, subgenomic mRNAs and progeny virion RNA as well as proteinases responsible for the cleavage of the polyprotein into functional products. Its function is as follows. Inhibits host translation by interacting with the 40S ribosomal subunit. The nsp1-40S ribosome complex further induces an endonucleolytic cleavage near the 5'UTR of host mRNAs, targeting them for degradation. Viral mRNAs are not susceptible to nsp1-mediated endonucleolytic RNA cleavage thanks to the presence of a 5'-end leader sequence and are therefore protected from degradation. By suppressing host gene expression, nsp1 facilitates efficient viral gene expression in infected cells and evasion from host immune response. In terms of biological role, may play a role in the modulation of host cell survival signaling pathway by interacting with host PHB and PHB2. Indeed, these two proteins play a role in maintaining the functional integrity of the mitochondria and protecting cells from various stresses. Functionally, responsible for the cleavages located at the N-terminus of the replicase polyprotein. In addition, PL-PRO possesses a deubiquitinating/deISGylating activity and processes both 'Lys-48'- and 'Lys-63'-linked polyubiquitin chains from cellular substrates. Participates together with nsp4 in the assembly of virally-induced cytoplasmic double-membrane vesicles necessary for viral replication. Antagonizes innate immune induction of type I interferon by blocking the phosphorylation, dimerization and subsequent nuclear translocation of host IRF3. Also prevents host NF-kappa-B signaling. Participates in the assembly of virally-induced cytoplasmic double-membrane vesicles necessary for viral replication. Its function is as follows. Cleaves the C-terminus of replicase polyprotein at 11 sites. Recognizes substrates containing the core sequence [ILMVF]-Q-|-[SGACN]. Also able to bind an ADP-ribose-1''-phosphate (ADRP). In terms of biological role, plays a role in the initial induction of autophagosomes from host endoplasmic reticulum. Later, limits the expansion of these phagosomes that are no longer able to deliver viral components to lysosomes. Functionally, forms a hexadecamer with nsp8 (8 subunits of each) that may participate in viral replication by acting as a primase. Alternatively, may synthesize substantially longer products than oligonucleotide primers. Forms a hexadecamer with nsp7 (8 subunits of each) that may participate in viral replication by acting as a primase. Alternatively, may synthesize substantially longer products than oligonucleotide primers. Its function is as follows. Forms a primer, NSP9-pU, which is utilized by the polymerase for the initiation of RNA chains. Interacts with ribosome signal recognition particle RNA (SRP). Together with NSP8, suppress protein integration into the cell membrane, thereby disrupting host immune defenses. In terms of biological role, plays a pivotal role in viral transcription by stimulating both nsp14 3'-5' exoribonuclease and nsp16 2'-O-methyltransferase activities. Therefore plays an essential role in viral mRNAs cap methylation. Functionally, RNA-directed RNA polymerase that catalyzes the transcription of viral genomic and subgenomic RNAs. Acts in complex with nsp7 and nsp8 to transcribe both the minus and positive strands of genomic RNA. The kinase-like NiRAN domain of NSP12 attaches one or more nucleotides to the amino terminus of NSP9, forming a covalent RNA-protein intermediate that serves as transcription/replication primer. Subgenomic RNAs (sgRNAs) are formed by discontinuous transcription: The polymerase has the ability to pause at transcription-regulating sequences (TRS) and jump to the leader TRS, resulting in a major deletion. This creates a series of subgenomic RNAs that are replicated, transcribed and translated. In addition, Nsp12 is a subunit of the viral RNA capping enzyme that catalyzes the RNA guanylyltransferase reaction for genomic and sub-genomic RNAs. Subsequently, the NiRAN domain transfers RNA to GDP, and forms the core cap structure GpppA-RNA. Multi-functional protein with a zinc-binding domain in N-terminus displaying RNA and DNA duplex-unwinding activities with 5' to 3' polarity. Activity of helicase is dependent on magnesium. Its function is as follows. Plays a role in viral RNA synthesis through two distinct activities. The N7-guanine methyltransferase activity plays a role in the formation of the cap structure GpppA-RNA. The proofreading exoribonuclease reduces the sensitivity of the virus to RNA mutagens during replication. This activity acts on both ssRNA and dsRNA in a 3'-5' direction. In terms of biological role, plays a role in viral transcription/replication and prevents the simultaneous activation of host cell dsRNA sensors, such as MDA5/IFIH1, OAS, and PKR. Acts by degrading the 5'-polyuridines generated during replication of the poly(A) region of viral genomic and subgenomic RNAs. Catalyzes a two-step reaction in which a 2'3'-cyclic phosphate (2'3'-cP) is first generated by 2'-O transesterification, which is then hydrolyzed to a 3'-phosphate (3'-P). If not degraded, poly(U) RNA would hybridize with poly(A) RNA tails and activate host dsRNA sensors. Functionally, 2'-O-methyltransferase: Methyltransferase that mediates mRNA cap 2'-O-ribose methylation to the 5'-cap structure of viral mRNAs. N7-methyl guanosine cap is a prerequisite for binding of nsp16. Therefore plays an essential role in viral mRNAs cap methylation which is essential to evade immune system. This is Replicase polyprotein 1ab (rep) from Mus musculus (Mouse).